Consider the following 505-residue polypeptide: Protein disulfide-isomerase A3 (505 aa).

Positions 1–24 (MSVPRPSRAALLLLVPLLALSAGA) are cleaved as a signal peptide. 2 consecutive Thioredoxin domains span residues 25–131 (SDVV…KQAG) and 341–483 (SRDG…REAT). Active-site nucleophile residues include cysteine 55 and cysteine 58. 3 disulfide bridges follow: cysteine 55–cysteine 58, cysteine 83–cysteine 90, and cysteine 404–cysteine 407. Active-site nucleophile residues include cysteine 404 and cysteine 407. The tract at residues 486–505 (PVLQEEDKAKKSKKKAKEDL) is disordered. Basic residues predominate over residues 495-505 (KKSKKKAKEDL). The Prevents secretion from ER motif lies at 502–505 (KEDL).

Belongs to the protein disulfide isomerase family.

The protein resides in the endoplasmic reticulum. It is found in the endoplasmic reticulum lumen. Its subcellular location is the melanosome. The enzyme catalyses Catalyzes the rearrangement of -S-S- bonds in proteins.. Functionally, protein disulfide isomerase that catalyzes the formation, isomerization, and reduction or oxidation of disulfide bonds in client proteins and functions as a protein folding chaperone. The chain is Protein disulfide-isomerase A3 (PDIA3) from Gallus gallus (Chicken).